Consider the following 501-residue polypeptide: MNRESFAAGERLVSPAYVRQGCEARRSHEHLIRLLLEKGKCPENGWDESTLELFLHELAIMDSNNFLGNCGVGEREGRVASALVARRHYRFIHGIGRSGDISAVQPKAAGSSLLNKIANSLVLDIIKLAGVHTVANCFVVPMATGMSLTLCFLTLRHKRPKAKYIIWPRIDQKSCFKSMITAGFEPVVIENVLEGDELRTDLKAVEAKVQELGPDYILCIHSTTSCFAPRVPDRLEELAVICANYGIPHIVNNAYGVQSSKCMHLIQQGARVGRIDAFVQSLDKNFMVPVGGAIIAGFNDSFIQEIGKMYPGRASASPSLDVLITLLSLGSNGYRKLLKERKEMFSYLSNQIKKLSEAYNERLLHTPHNPISLAMTLKTLDEHHDKAVTQLGSMLFTRQVSGARVVPLGSVQTVSGYTFRGFMSHTNNYPCAYLNAASAIGMKMQDVDLFIKRLDKCLKAVRKEQSKESDDNYDKTEDVDIEEMALKLDNVLLDTYQDASS.

The segment at 1-44 (MNRESFAAGERLVSPAYVRQGCEARRSHEHLIRLLLEKGKCPEN) is tetramerization. Residue Ser14 is modified to Phosphoserine. Arg75 lines the pyridoxal 5'-phosphate pocket. The phosphate loop (P-loop) stretch occupies residues 96 to 106 (GRSGDISAVQP). Residues Arg97, Ser98, and Gln105 each contribute to the substrate site. Arg271 contributes to the tRNA binding site. The residue at position 284 (Lys284) is an N6-(pyridoxal phosphate)lysine. Position 313 (Arg313) interacts with substrate. Residues Arg398 and Lys463 each contribute to the tRNA site.

Belongs to the SepSecS family. Homotetramer formed by a catalytic dimer and a non-catalytic dimer serving as a binding platform that orients tRNASec for catalysis. Each tetramer binds the CCA ends of two tRNAs which point to the active sites of the catalytic dimer. It depends on pyridoxal 5'-phosphate as a cofactor.

Its subcellular location is the cytoplasm. It carries out the reaction O-phospho-L-seryl-tRNA(Sec) + selenophosphate + H2O = L-selenocysteinyl-tRNA(Sec) + 2 phosphate. It participates in aminoacyl-tRNA biosynthesis; selenocysteinyl-tRNA(Sec) biosynthesis; selenocysteinyl-tRNA(Sec) from L-seryl-tRNA(Sec) (archaeal/eukaryal route): step 2/2. Its function is as follows. Converts O-phosphoseryl-tRNA(Sec) to selenocysteinyl-tRNA(Sec) required for selenoprotein biosynthesis. The protein is O-phosphoseryl-tRNA(Sec) selenium transferase (SEPSECS) of Pongo abelii (Sumatran orangutan).